A 313-amino-acid polypeptide reads, in one-letter code: uncharacterized protein (313 aa).

The segment at 1 to 313 (MSRNGRNDYD…SSSRSGSSRR (313 aa)) is disordered. Basic and acidic residues-rich tracts occupy residues 24–33 (LARDRERDSE), 40–85 (TGER…DVKY), 95–116 (TTRE…DELG), and 156–181 (TDER…DEFG). A compositionally biased stretch (basic residues) spans 194-205 (RGRRSNSRRRSS). Composition is skewed to low complexity over residues 206–266 (NARS…GSKS) and 272–313 (SRSG…SSRR).

The protein resides in the virion. This is an uncharacterized protein from Acanthamoeba polyphaga mimivirus (APMV).